The primary structure comprises 501 residues: Tegument protein US24 (501 aa).

The protein belongs to the herpesviridae US22 family.

Its subcellular location is the virion tegument. This chain is Tegument protein US24 (US24), found in Human cytomegalovirus (strain Merlin) (HHV-5).